We begin with the raw amino-acid sequence, 331 residues long: Cathepsin S (331 aa).

The first 16 residues, Met-1–Ala-16, serve as a signal peptide directing secretion. A propeptide spans Gln-17–Lys-114 (activation peptide). An N-linked (GlcNAc...) asparagine glycan is attached at Asn-104. 4 disulfide bridges follow: Cys-126–Cys-224, Cys-136–Cys-180, Cys-170–Cys-213, and Cys-272–Cys-320. Residue Cys-139 is part of the active site. Active-site residues include His-278 and Asn-298.

The protein belongs to the peptidase C1 family.

It localises to the lysosome. It is found in the secreted. The protein resides in the cytoplasmic vesicle. The protein localises to the phagosome. It catalyses the reaction Similar to cathepsin L, but with much less activity on Z-Phe-Arg-|-NHMec, and more activity on the Z-Val-Val-Arg-|-Xaa compound.. Its function is as follows. Thiol protease. Key protease responsible for the removal of the invariant chain from MHC class II molecules and MHC class II antigen presentation. The bond-specificity of this proteinase is in part similar to the specificities of cathepsin L. The polypeptide is Cathepsin S (CTSS) (Canis lupus familiaris (Dog)).